The sequence spans 210 residues: MGQVFLLMPVLLVSCFLSHGAAIENQRLFNIAVSRVQHLHLLAQKMFNDFDGTLLPDERRQLNKIFLLDFCNSDSIVSPIDKHETQKSSVLKLLHISFRLIESWEYPSQTLIISNSLMVRNANQISEKLSDLKVGINLLITGNQDGVLSLDDNDSQQLPPYGNYYQNLGGDGNVRRNYELLACFKKDMHKVETYLTVAKCRKSLEANCTL.

A signal peptide spans 1–22 (MGQVFLLMPVLLVSCFLSHGAA). Residue His38 participates in Zn(2+) binding. Residues Cys71 and Cys183 are joined by a disulfide bond. Residue Glu192 participates in Zn(2+) binding. Cys200 and Cys208 are joined by a disulfide.

Belongs to the somatotropin/prolactin family.

Its subcellular location is the secreted. Its function is as follows. Growth hormone plays an important role in growth control and is involved in the regulation of several anabolic processes. Implicated as an osmoregulatory substance important for seawater adaptation. The chain is Somatotropin (gh) from Oncorhynchus masou (Cherry salmon).